A 204-amino-acid polypeptide reads, in one-letter code: MEPITRVTGTGVPLKRSNVDTDQIVPSQFLKRVTKTGFEDALFFQWRKDPAFFVNQPAYEGATVLVAGPDFGTGSSREHAVWALRDYGFRAVLSPRFGDIFRGNSGKQGLLTGIVTEDDVERLWAAMDAEPGLDLTVDLVERIATAPGLTVPFEIDEYTRWRLLEGLDDIALTLRDEDAITTFEHRRASWRPRTLPARPAALEN.

This sequence belongs to the LeuD family. LeuD type 1 subfamily. Heterodimer of LeuC and LeuD.

It carries out the reaction (2R,3S)-3-isopropylmalate = (2S)-2-isopropylmalate. It participates in amino-acid biosynthesis; L-leucine biosynthesis; L-leucine from 3-methyl-2-oxobutanoate: step 2/4. Functionally, catalyzes the isomerization between 2-isopropylmalate and 3-isopropylmalate, via the formation of 2-isopropylmaleate. This chain is 3-isopropylmalate dehydratase small subunit, found in Clavibacter michiganensis subsp. michiganensis (strain NCPPB 382).